An 82-amino-acid chain; its full sequence is Cyclin-dependent kinases regulatory subunit (82 aa).

It belongs to the CKS family. In terms of assembly, forms a homohexamer that can probably bind six kinase subunits.

Functionally, binds to the catalytic subunit of the cyclin dependent kinases and is essential for their biological function. The chain is Cyclin-dependent kinases regulatory subunit (cks1) from Dictyostelium discoideum (Social amoeba).